The chain runs to 463 residues: MLTILKTGQSAHKVPPEKVQATYGRYRIQALLSVFLGYLAYYIVRNNFTLSTPYLKEQLDLSATQIGLLSSCMLIAYGISKGVMSSLADKASPKVFMACGLVLCAIVNVGLGFSSAFWIFAALVVFNGLFQGMGVGPSFITIANWFPRRERGRVGAFWNISHNVGGGIVAPIVGAAFAILGSEHWQSASYIVPACVAVIFALIVLVLGKGSPRKEGLPSLEQMMPEEKVVLKTKNTAKAPENMSAWQIFCTYVLRNKNAWYISLVDVFVYMVRFGMISWLPIYLLTVKHFSKEQMSVAFLFFEWAAIPSTLLAGWLSDKLFKGRRMPLAMICMALIFVCLIGYWKSESLLMVTIFAAIVGCLIYVPQFLASVQTMEIVPSFAVGSAVGLRGFMSYIFGASLGTSLFGVMVDKLGWYGGFYLLMGGIVCCILFCYLSHRGALELERQRQNALHNQDSLQLADAQ.

Over 1 to 29 the chain is Cytoplasmic; the sequence is MLTILKTGQSAHKVPPEKVQATYGRYRIQ. 12 helical membrane-spanning segments follow: residues 30–50, 59–79, 106–126, 127–147, 160–180, 188–208, 267–287, 297–317, 326–346, 349–369, 391–411, and 413–433; these read ALLSVFLGYLAYYIVRNNFTL, LDLSATQIGLLSSCMLIAYGI, IVNVGLGFSSAFWIFAALVVF, NGLFQGMGVGPSFITIANWFP, ISHNVGGGIVAPIVGAAFAIL, ASYIVPACVAVIFALIVLVLG, VFVYMVRFGMISWLPIYLLTV, VAFLFFEWAAIPSTLLAGWLS, MPLAMICMALIFVCLIGYWKS, LLMVTIFAAIVGCLIYVPQFL, GFMSYIFGASLGTSLFGVMVD, and LGWYGGFYLLMGGIVCCILFC.

The protein belongs to the major facilitator superfamily. Organophosphate:Pi antiporter (OPA) (TC 2.A.1.4) family.

Its subcellular location is the cell inner membrane. In terms of biological role, the phosphoglycerate transporter protein is a part of the PGT transport system. It is the membrane bound transporter for phosphoglycerate into salmonella. The polypeptide is Phosphoglycerate transporter protein (pgtP) (Salmonella typhimurium (strain LT2 / SGSC1412 / ATCC 700720)).